The following is a 91-amino-acid chain: Alpha-elapitoxin-Oh2b (91 aa).

A signal peptide spans 1–21 (MKTLLLTLVVMTIVCLDLGYT). 5 disulfide bridges follow: Cys-24/Cys-41, Cys-34/Cys-62, Cys-47/Cys-51, Cys-66/Cys-77, and Cys-78/Cys-83.

This sequence belongs to the three-finger toxin family. Long-chain subfamily. Type II alpha-neurotoxin sub-subfamily. In terms of assembly, monomer. Expressed by the venom gland.

Its subcellular location is the secreted. In terms of biological role, binds with high affinity to muscular (alpha-1/CHRNA1) and neuronal (alpha-7/CHRNA7) nicotinic acetylcholine receptor (nAChR) and inhibits acetylcholine from binding to the receptor, thereby impairing neuromuscular and neuronal transmission. Recombinant LNTX1 leads to a functional block of the muscle-type acetylcholine receptors. Has a cytotoxic activity. This neurotoxin is lethal. The chain is Alpha-elapitoxin-Oh2b from Ophiophagus hannah (King cobra).